We begin with the raw amino-acid sequence, 134 residues long: Z-ring associated protein G (134 aa).

A helical transmembrane segment spans residues E7–V27. The tract at residues A107–N134 is disordered. The span at S111–S120 shows a compositional bias: basic and acidic residues.

It belongs to the ZapG family.

It is found in the cell inner membrane. Involved in cell division, cell envelope biogenesis and cell shape maintenance. This is Z-ring associated protein G from Haemophilus influenzae (strain ATCC 51907 / DSM 11121 / KW20 / Rd).